Here is a 438-residue protein sequence, read N- to C-terminus: 23S rRNA (uracil(1939)-C(5))-methyltransferase RlmD (438 aa).

One can recognise a TRAM domain in the interval 13 to 71 (KAPLGPMQTYLVEGLTHEAKGVARLNGKVTFIEGALPGETVTAQVNKPGRRFDEAVLNA). 4 residues coordinate [4Fe-4S] cluster: Cys-84, Cys-90, Cys-93, and Cys-167. S-adenosyl-L-methionine contacts are provided by Gln-271, Phe-300, Asn-305, Glu-321, Asp-348, and Asp-368. The active-site Nucleophile is the Cys-394.

The protein belongs to the class I-like SAM-binding methyltransferase superfamily. RNA M5U methyltransferase family. RlmD subfamily.

It carries out the reaction uridine(1939) in 23S rRNA + S-adenosyl-L-methionine = 5-methyluridine(1939) in 23S rRNA + S-adenosyl-L-homocysteine + H(+). Functionally, catalyzes the formation of 5-methyl-uridine at position 1939 (m5U1939) in 23S rRNA. In Marinomonas posidonica (strain CECT 7376 / NCIMB 14433 / IVIA-Po-181), this protein is 23S rRNA (uracil(1939)-C(5))-methyltransferase RlmD.